Reading from the N-terminus, the 1281-residue chain is Zinc finger transcription factor Trps1 (1281 aa).

The interval 1 to 198 (MVRKKNPPLR…VPSDGGVRLN (198 aa)) is disordered. A Glycyl lysine isopeptide (Lys-Gly) (interchain with G-Cter in SUMO2) cross-link involves residue Lys-29. A compositionally biased stretch (polar residues) spans 40–49 (DQMSENTDQS). Over residues 53–63 (ELNHKEEHSLH) the composition is skewed to basic and acidic residues. Lys-76 is covalently cross-linked (Glycyl lysine isopeptide (Lys-Gly) (interchain with G-Cter in SUMO2)). Residues Ser-90 and Ser-127 each carry the phosphoserine modification. Over residues 148 to 162 (LETKEDQKMSPKATE) the composition is skewed to basic and acidic residues. A compositionally biased stretch (polar residues) spans 163–189 (ETGQAQSGQANCQGLSPVSVASKNPQV). Phosphoserine is present on residues Ser-178 and Ser-216. The C2H2-type 1; atypical zinc finger occupies 222 to 247 (FKCNICGYGYYGNDPTDLIKHFRKYH). A Glycyl lysine isopeptide (Lys-Gly) (interchain with G-Cter in SUMO2) cross-link involves residue Lys-263. A C2H2-type 2; atypical zinc finger spans residues 333 to 358 (FRCKFCNFTYMGNSSTELEQHFLQTH). The segment at 365-394 (SLPSSEVAKPSEKNSNKSIPALQSSDSGDL) is disordered. The span at 380 to 391 (NKSIPALQSSDS) shows a compositional bias: polar residues. Glycyl lysine isopeptide (Lys-Gly) (interchain with G-Cter in SUMO2) cross-links involve residues Lys-418, Lys-457, Lys-474, and Lys-488. Positions 483–512 (QNDLAKSSEGETMTKTDKSSSGAKKKDFSS) are disordered. A compositionally biased stretch (basic and acidic residues) spans 488–512 (KSSEGETMTKTDKSSSGAKKKDFSS). A C2H2-type 3; atypical zinc finger spans residues 614–637 (HQCHQCSFTTPDVDVLLFHYESVH). Residues 635–819 (SVHESQASDV…SLGLLTPVSG (185 aa)) are mediates interaction with GLI3. Residue Lys-645 forms a Glycyl lysine isopeptide (Lys-Gly) (interchain with G-Cter in SUMO2) linkage. 2 C2H2-type zinc fingers span residues 666 to 689 (HSCT…RRAH) and 692 to 715 (YKCR…NTVH). Residue Lys-737 forms a Glycyl lysine isopeptide (Lys-Gly) (interchain with G-Cter in SUMO2) linkage. Phosphothreonine is present on Thr-751. A Glycyl lysine isopeptide (Lys-Gly) (interchain with G-Cter in SUMO2) cross-link involves residue Lys-755. A Glycyl lysine isopeptide (Lys-Gly) (interchain with G-Cter in SUMO1); alternate cross-link involves residue Lys-766. Lys-766 is covalently cross-linked (Glycyl lysine isopeptide (Lys-Gly) (interchain with G-Cter in SUMO2); alternate). Residues Lys-825, Lys-850, Lys-877, and Lys-879 each participate in a glycyl lysine isopeptide (Lys-Gly) (interchain with G-Cter in SUMO2) cross-link. Residues 856–887 (APAGGEKSGALPQQYPASGENKSKDESQSLLR) form a disordered region. The GATA-type zinc-finger motif lies at 896 to 920 (CANCLTTKTSLWRKNANGGYVCNAC). Residues Lys-925, Lys-937, and Lys-965 each participate in a glycyl lysine isopeptide (Lys-Gly) (interchain with G-Cter in SUMO2) cross-link. Residues 961-977 (EQLNKQQRGSNEEQVNG) are compositionally biased toward polar residues. The tract at residues 961–1000 (EQLNKQQRGSNEEQVNGSPLERRSEDHLTESHQREIPLPS) is disordered. At Ser-978 the chain carries Phosphoserine. A compositionally biased stretch (basic and acidic residues) spans 980 to 995 (LERRSEDHLTESHQRE). Residues 985–1184 (EDHLTESHQR…PTANGASKEK (200 aa)) form a mediates interaction with RNF4 region. Residues Lys-1003, Lys-1012, Lys-1030, and Lys-1040 each participate in a glycyl lysine isopeptide (Lys-Gly) (interchain with G-Cter in SUMO2) cross-link. The interval 1039 to 1080 (IKSPQESTGDPGNSSSVSEGKGSSERGSPIEKYMRPAKHPNY) is disordered. Over residues 1040–1049 (KSPQESTGDP) the composition is skewed to polar residues. Position 1041 is a phosphoserine (Ser-1041). The segment covering 1050 to 1059 (GNSSSVSEGK) has biased composition (low complexity). Residues 1060–1072 (GSSERGSPIEKYM) are compositionally biased toward basic and acidic residues. Position 1066 is a phosphoserine (Ser-1066). Residue Lys-1070 forms a Glycyl lysine isopeptide (Lys-Gly) (interchain with G-Cter in SUMO2) linkage. Ser-1085 is modified (phosphoserine). The interval 1163–1281 (PLDLAIKHSR…QVEKNGKPKE (119 aa)) is transcriptional repressor domain. The tract at residues 1168–1196 (IKHSRPGPTANGASKEKTKAPPNVKNEGP) is disordered. Residues Lys-1192 and Lys-1201 each participate in a glycyl lysine isopeptide (Lys-Gly) (interchain with G-Cter in SUMO2); alternate cross-link. Glycyl lysine isopeptide (Lys-Gly) (interchain with G-Cter in SUMO); alternate cross-links involve residues Lys-1192 and Lys-1201. Lys-1201 participates in a covalent cross-link: Glycyl lysine isopeptide (Lys-Gly) (interchain with G-Cter in SUMO1); alternate. C2H2-type zinc fingers lie at residues 1215 to 1237 (TKCV…MSCH) and 1243 to 1267 (FQCS…RGLH).

Interacts with RNF4; regulates TRPS1 repressor activity. Interacts specifically with the activator form of GLI3 (GLI3A) but not with the repressor form (GLI3R). In terms of processing, sumoylated. Sumoylation in the repressor domain inhibits the transcription repression activity. Sumoylation on Lys-1201 is the major site. Appears to be sumoylated on multiple sites. Ubiquitously expressed in the adult. Found in fetal brain, lung, kidney, liver, spleen and thymus. More highly expressed in androgen-dependent than in androgen-independent prostate cancer cells.

Its subcellular location is the nucleus. Transcriptional repressor. Binds specifically to GATA sequences and represses expression of GATA-regulated genes at selected sites and stages in vertebrate development. Regulates chondrocyte proliferation and differentiation. Executes multiple functions in proliferating chondrocytes, expanding the region of distal chondrocytes, activating proliferation in columnar cells and supporting the differentiation of columnar into hypertrophic chondrocytes. In Homo sapiens (Human), this protein is Zinc finger transcription factor Trps1 (TRPS1).